The sequence spans 215 residues: Cytochrome b6 (215 aa).

A helical transmembrane segment spans residues 32–52 (IFYCLGGITLTCFLVQVASGF). A heme c-binding site is contributed by Cys35. Residues His86 and His100 each contribute to the heme b site. Helical transmembrane passes span 90–110 (ASMM…TGGF), 116–136 (LTWV…VTGY), and 186–206 (LHTF…FLMI). Heme b contacts are provided by His187 and His202.

It belongs to the cytochrome b family. PetB subfamily. As to quaternary structure, the 4 large subunits of the cytochrome b6-f complex are cytochrome b6, subunit IV (17 kDa polypeptide, PetD), cytochrome f and the Rieske protein, while the 4 small subunits are PetG, PetL, PetM and PetN. The complex functions as a dimer. Heme b is required as a cofactor. The cofactor is heme c.

The protein resides in the plastid. Its subcellular location is the chloroplast thylakoid membrane. Its function is as follows. Component of the cytochrome b6-f complex, which mediates electron transfer between photosystem II (PSII) and photosystem I (PSI), cyclic electron flow around PSI, and state transitions. The chain is Cytochrome b6 from Anthoceros angustus (Hornwort).